Reading from the N-terminus, the 131-residue chain is SPbeta prophage-derived uncharacterized protein YoqY (131 aa).

This Bacillus subtilis (strain 168) protein is SPbeta prophage-derived uncharacterized protein YoqY (yoqY).